Reading from the N-terminus, the 347-residue chain is MNPLAQPIIYSTIFAGTLITASSSHWFLAWVGLEMNMLAFIPVLTKKMNPRSTEAAIKYFLVQATASMILMMAILSNNLLSGQWTTTNITNQYSSLMILTALAMKLGMAPFHFWVPEVTQGTTLTSGLLLLTWQKLAPISIMYQIFPVMNVNILLTFSILSIMVGSWGGLNQTQLRKILAYSSITHVGWMTAVLPYNPNITIFNLTIYIVLTTTAFLALNLNSSTTTLLLSRSWNKLTWLLPLIPSTLLSLGGLPPLTGFLPKWLVIEELTKNGTLIIPTIMAIVTLINLYFYMRLIYSTSITLFPTSNNVKMKWQFENMKPTLLLPTLTILTTLLLPIAPLTFPAP.

Transmembrane regions (helical) follow at residues M1–A21, H25–T45, A55–L75, L96–P116, T123–Y143, I145–G165, I178–P198, N199–L219, L237–L257, G274–M294, and L324–F344.

Belongs to the complex I subunit 2 family. As to quaternary structure, core subunit of respiratory chain NADH dehydrogenase (Complex I) which is composed of 45 different subunits. Interacts with TMEM242.

The protein localises to the mitochondrion inner membrane. It catalyses the reaction a ubiquinone + NADH + 5 H(+)(in) = a ubiquinol + NAD(+) + 4 H(+)(out). Functionally, core subunit of the mitochondrial membrane respiratory chain NADH dehydrogenase (Complex I) which catalyzes electron transfer from NADH through the respiratory chain, using ubiquinone as an electron acceptor. Essential for the catalytic activity and assembly of complex I. The sequence is that of NADH-ubiquinone oxidoreductase chain 2 from Symphalangus syndactylus (Siamang).